The following is a 293-amino-acid chain: Putative ribose uptake protein RbsU (293 aa).

10 helical membrane-spanning segments follow: residues Ala-5–Ser-24, Ile-34–Phe-51, Gly-58–Phe-80, Thr-95–Trp-114, Ile-121–Val-138, Ser-153–Ala-170, Ile-177–Leu-199, Val-212–Ala-234, Leu-241–Leu-263, and Met-273–Ile-292.

This sequence belongs to the GRP transporter (TC 2.A.7.5) family.

Its subcellular location is the cell membrane. Could be involved in the uptake of ribose. This Staphylococcus epidermidis (strain ATCC 12228 / FDA PCI 1200) protein is Putative ribose uptake protein RbsU (rbsU).